The chain runs to 133 residues: Large ribosomal subunit protein bL20 (133 aa).

It belongs to the bacterial ribosomal protein bL20 family.

Functionally, binds directly to 23S ribosomal RNA and is necessary for the in vitro assembly process of the 50S ribosomal subunit. It is not involved in the protein synthesizing functions of that subunit. This Bartonella tribocorum (strain CIP 105476 / IBS 506) protein is Large ribosomal subunit protein bL20.